A 279-amino-acid chain; its full sequence is Nucleotide-binding protein THA_1518 (279 aa).

Position 9–16 (9–16) interacts with ATP; the sequence is GLSGAGKS. 57–60 contributes to the GTP binding site; that stretch reads DARS.

It belongs to the RapZ-like family.

In terms of biological role, displays ATPase and GTPase activities. In Thermosipho africanus (strain TCF52B), this protein is Nucleotide-binding protein THA_1518.